Here is a 252-residue protein sequence, read N- to C-terminus: Vacuolar iron transporter 1 (252 aa).

The Cytoplasmic portion of the chain corresponds to 1–38 (MAAATDGGGLPLLADKAASHSHHHHPERHFTSGEVVRD). Residues 39 to 59 (VIMGVSDGLTVPFALAAGLSG) form a helical membrane-spanning segment. Topologically, residues 60 to 65 (ASAPSS) are vacuolar. The chain crosses the membrane as a helical span at residues 66–86 (LVLTAGLAEVAAGAISMGLGG). Residues 87-170 (YLAAKSEADH…PDPKRAIQSA (84 aa)) lie on the Cytoplasmic side of the membrane. The tract at residues 92–167 (SEADHYQREM…LEKPDPKRAI (76 aa)) is cytoplasmic metal binding domain (MBD). Positions 104, 107, 115, 118, 151, and 155 each coordinate Fe cation. Residues 171–191 (LTIALSYVIGGLVPLLPYMFI) traverse the membrane as a helical segment. Residues 192–196 (STAQN) lie on the Vacuolar side of the membrane. The helical transmembrane segment at 197–217 (AMLTSVGVTLVALLFFGYIKG) threads the bilayer. The Cytoplasmic segment spans residues 218–224 (RFTGNRP). The chain crosses the membrane as a helical span at residues 225 to 245 (FLSAVQTAIIGALASAAAYGM). Residues 246 to 252 (AKAVQTR) are Vacuolar-facing.

It belongs to the CCC1 family. As to quaternary structure, homodimer. The dimeric interaction is mediated by both the transmembrane domains (TMDs) and the cytoplasmic metal binding domain (MBD). In terms of tissue distribution, highly expressed in leaf blades. Expressed in leaf sheaths.

The protein localises to the vacuole membrane. The catalysed reaction is Fe(2+)(in) = Fe(2+)(out). Functionally, vacuolar iron transporter involved in the transfer of iron ions from the cytosol to the vacuole for intracellular iron storage. Vacuolar iron storage is required for seed embryo and seedling development. May be involved in the regulation of iron translocation between flag leaves and seeds. Can transport zinc ions from the cytosol to the vacuole. The chain is Vacuolar iron transporter 1 from Oryza sativa subsp. japonica (Rice).